The chain runs to 396 residues: Tryptophan synthase beta chain (396 aa).

K88 carries the post-translational modification N6-(pyridoxal phosphate)lysine.

This sequence belongs to the TrpB family. Tetramer of two alpha and two beta chains. Pyridoxal 5'-phosphate serves as cofactor.

It carries out the reaction (1S,2R)-1-C-(indol-3-yl)glycerol 3-phosphate + L-serine = D-glyceraldehyde 3-phosphate + L-tryptophan + H2O. Its pathway is amino-acid biosynthesis; L-tryptophan biosynthesis; L-tryptophan from chorismate: step 5/5. The beta subunit is responsible for the synthesis of L-tryptophan from indole and L-serine. This chain is Tryptophan synthase beta chain, found in Shewanella sp. (strain MR-7).